The following is a 677-amino-acid chain: Protein hook (677 aa).

The region spanning N6 to A123 is the Calponin-homology (CH) domain. 2 coiled-coil regions span residues E135–H436 and Q478–V588.

This sequence belongs to the hook family. As to quaternary structure, homodimer. Interacts with microtubules via its N-terminus.

It localises to the cytoplasm. It is found in the cytoskeleton. The protein localises to the endosome. The protein resides in the synapse. In terms of biological role, involved in endocytic trafficking by stabilizing organelles of the endocytic pathway. Probably acts as a cytoskeletal linker protein required to tether endosome vesicles to the cytoskeleton. Involved in modulation of endocytosis at stages required for down-regulation of membrane proteins that control synapse size. Not involved in synaptic vesicle recycling. Required in R7 cells for boss endocytosis into multivesicular bodies (MVBs). Has a role in regulating adult longevity. This chain is Protein hook, found in Drosophila persimilis (Fruit fly).